The sequence spans 217 residues: Nascent polypeptide-associated complex subunit alpha (217 aa).

Residues 1-45 form a disordered region; that stretch reads MPELTEIKSEAAPSTSAEAKPEDVRVEDDGSDSDSDGGMPGLEEA. The segment covering 19 to 28 has biased composition (basic and acidic residues); it reads AKPEDVRVED. Residues 70-135 enclose the NAC-A/B domain; it reads SRGEKKARKI…AKIEDLSQQA (66 aa). The disordered stretch occupies residues 154–177; the sequence is SVGATTSVAPIAEEDEEDVDDTGV. Positions 165–176 are enriched in acidic residues; sequence AEEDEEDVDDTG. In terms of domain architecture, UBA spans 177–217; the sequence is VDEKDIELVITQANTTRAKAIKALKNNNNDIVNAIMELTML.

This sequence belongs to the NAC-alpha family. As to quaternary structure, part of the nascent polypeptide-associated complex (NAC), consisting of Nac-alpha and bicaudal (bic).

Functionally, may promote appropriate targeting of ribosome-nascent polypeptide complexes. Required for correct localization of the osk/oskar protein to the posterior pole during embryonic development. The osk protein directs the recruitment of molecules responsible for posterior body patterning and germline formation in the embryo. In Drosophila melanogaster (Fruit fly), this protein is Nascent polypeptide-associated complex subunit alpha (Nacalpha).